Consider the following 282-residue polypeptide: Exo-glucosaminidase LytG (282 aa).

Positions 1 to 29 (MARKKLKKRKLLISLFFLVSIPLALFVLA) are cleaved as a signal peptide. The region spanning 203–281 (SLKSVDLNAS…DDSAVEIKEA (79 aa)) is the GW domain.

This sequence belongs to the glycosyl hydrolase 73 family. It depends on Mg(2+) as a cofactor.

Its subcellular location is the secreted. The protein resides in the cell wall. Its activity is regulated as follows. Inhibited by EDTA. Functionally, is the major glucosaminidase responsible for peptidoglycan structural determination during vegetative growth. Catalyzes the hydrolysis of 1,4-beta-linkages between N-acetyl-D-glucosamine and N-acetylmuramic acid residues in peptidoglycan. Acts processively from the ends of the glycan strands. Also plays a role in motility, chemotaxis and cell division. The sequence is that of Exo-glucosaminidase LytG (lytG) from Bacillus subtilis (strain 168).